A 264-amino-acid chain; its full sequence is ATP synthase subunit a (264 aa).

The next 6 helical transmembrane spans lie at 29–49 (TWHI…LWIF), 87–107 (NALI…MNFM), 134–154 (DVNI…YYSI), 177–197 (IPVN…SLAL), 208–228 (LIFI…SLGV), and 235–255 (LIFH…LTIV).

Belongs to the ATPase A chain family. F-type ATPases have 2 components, CF(1) - the catalytic core - and CF(0) - the membrane proton channel. CF(1) has five subunits: alpha(3), beta(3), gamma(1), delta(1), epsilon(1). CF(0) has three main subunits: a(1), b(2) and c(9-12). The alpha and beta chains form an alternating ring which encloses part of the gamma chain. CF(1) is attached to CF(0) by a central stalk formed by the gamma and epsilon chains, while a peripheral stalk is formed by the delta and b chains.

The protein resides in the cell inner membrane. Key component of the proton channel; it plays a direct role in the translocation of protons across the membrane. This Shewanella sp. (strain ANA-3) protein is ATP synthase subunit a.